The following is a 283-amino-acid chain: 4-diphosphocytidyl-2-C-methyl-D-erythritol kinase (283 aa).

Lysine 10 is an active-site residue. 99-109 provides a ligand contact to ATP; the sequence is PMGGGLGGGSS. Residue aspartate 141 is part of the active site.

The protein belongs to the GHMP kinase family. IspE subfamily. As to quaternary structure, homodimer.

It catalyses the reaction 4-CDP-2-C-methyl-D-erythritol + ATP = 4-CDP-2-C-methyl-D-erythritol 2-phosphate + ADP + H(+). It functions in the pathway isoprenoid biosynthesis; isopentenyl diphosphate biosynthesis via DXP pathway; isopentenyl diphosphate from 1-deoxy-D-xylulose 5-phosphate: step 3/6. In terms of biological role, catalyzes the phosphorylation of the position 2 hydroxy group of 4-diphosphocytidyl-2C-methyl-D-erythritol. The sequence is that of 4-diphosphocytidyl-2-C-methyl-D-erythritol kinase from Escherichia coli (strain 55989 / EAEC).